A 383-amino-acid chain; its full sequence is 1-deoxy-D-xylulose 5-phosphate reductoisomerase (383 aa).

NADPH contacts are provided by Thr-10, Gly-11, Ser-12, Ile-13, Gly-36, Arg-37, Asn-38, and Asn-122. Lys-123 provides a ligand contact to 1-deoxy-D-xylulose 5-phosphate. Residue Glu-124 coordinates NADPH. A Mn(2+)-binding site is contributed by Asp-148. Residues Ser-149, Glu-150, Ser-174, and His-197 each contribute to the 1-deoxy-D-xylulose 5-phosphate site. Glu-150 serves as a coordination point for Mn(2+). Gly-203 provides a ligand contact to NADPH. The 1-deoxy-D-xylulose 5-phosphate site is built by Ser-210, Asn-215, Lys-216, and Glu-219. Mn(2+) is bound at residue Glu-219.

The protein belongs to the DXR family. The cofactor is Mg(2+). Requires Mn(2+) as cofactor.

The enzyme catalyses 2-C-methyl-D-erythritol 4-phosphate + NADP(+) = 1-deoxy-D-xylulose 5-phosphate + NADPH + H(+). The protein operates within isoprenoid biosynthesis; isopentenyl diphosphate biosynthesis via DXP pathway; isopentenyl diphosphate from 1-deoxy-D-xylulose 5-phosphate: step 1/6. In terms of biological role, catalyzes the NADPH-dependent rearrangement and reduction of 1-deoxy-D-xylulose-5-phosphate (DXP) to 2-C-methyl-D-erythritol 4-phosphate (MEP). In Bacillus subtilis (strain 168), this protein is 1-deoxy-D-xylulose 5-phosphate reductoisomerase.